The primary structure comprises 99 residues: DNA-directed RNA polymerase subunit omega (99 aa).

The protein belongs to the RNA polymerase subunit omega family. The RNAP catalytic core consists of 2 alpha, 1 beta, 1 beta' and 1 omega subunit. When a sigma factor is associated with the core the holoenzyme is formed, which can initiate transcription.

It catalyses the reaction RNA(n) + a ribonucleoside 5'-triphosphate = RNA(n+1) + diphosphate. In terms of biological role, promotes RNA polymerase assembly. Latches the N- and C-terminal regions of the beta' subunit thereby facilitating its interaction with the beta and alpha subunits. In Deinococcus radiodurans (strain ATCC 13939 / DSM 20539 / JCM 16871 / CCUG 27074 / LMG 4051 / NBRC 15346 / NCIMB 9279 / VKM B-1422 / R1), this protein is DNA-directed RNA polymerase subunit omega (rpoZ).